We begin with the raw amino-acid sequence, 1174 residues long: K(+) efflux antiporter 2, chloroplastic (1174 aa).

Residues 1–57 (MDFASSVQRQSMFHGGADFASYCLPNRMISAKLCPKGLGGTRFWDPMIDSKVRSAIR) constitute a chloroplast transit peptide. Over 58–565 (SKRNVSYRSS…MFPQQEVNEE (508 aa)) the chain is Stromal. Residues 119–141 (GSDDREVTFSKEEKDTREQDSAP) form a disordered region. Positions 142 to 350 (SLEELRDLLN…ALQRAEKTLF (209 aa)) form a coiled coil. K170 is modified (N6-acetyllysine; by NSI). Residues 420–448 (EAEGEAEKSKNVVLTKKQEVQKDLPRESS) show a composition bias toward basic and acidic residues. Residues 420 to 457 (EAEGEAEKSKNVVLTKKQEVQKDLPRESSSHNGTKTSL) are disordered. A helical membrane pass occupies residues 566–586 (EASLLDVLWLLLASVIFVPLF). Residues 587 to 592 (QKIPGG) are Chloroplast intermembrane-facing. Residues 593–613 (SPVLGYLAAGILIGPYGLSII) form a helical membrane-spanning segment. The Stromal portion of the chain corresponds to 614–620 (RNVHGTK). The helical transmembrane segment at 621 to 641 (AIAEFGVVFLLFNIGLELSVE) threads the bilayer. The Chloroplast intermembrane portion of the chain corresponds to 642 to 648 (RLSSMKK). Residues 649-669 (YVFGLGSAQVLVTAAVIGLIT) traverse the membrane as a helical segment. The Stromal segment spans residues 670 to 678 (HYVAGQAGP). Residues 679-699 (AAIVIGNGLALSSTAVVLQVL) form a helical membrane-spanning segment. Residues 700–713 (QERGESTSRHGRAT) are Chloroplast intermembrane-facing. Residues 714-734 (FSVLLFQDLAVVVLLILIPLI) traverse the membrane as a helical segment. Residues 735–746 (SPNSSKGGIGFQ) lie on the Stromal side of the membrane. A helical membrane pass occupies residues 747–767 (AIAEALGLAAIKAAVAITGII). Over 768 to 807 (AGGRLLLRPIYKQIAENRNAEIFSANTLLVILGTSLLTAR) the chain is Chloroplast intermembrane. The chain crosses the membrane as a helical span at residues 808–828 (AGLSMALGAFLAGLLLAETEF). Over 829 to 841 (SLQVESDIAPYRG) the chain is Stromal. A helical transmembrane segment spans residues 842–862 (LLLGLFFMTVGMSIDPKLLLA). Residues 863–865 (NFP) lie on the Chloroplast intermembrane side of the membrane. The helical transmembrane segment at 866–886 (LIMGTLGLLLVGKTILVVIIG) threads the bilayer. Over 887–898 (KLFGISIISAVR) the chain is Stromal. The chain crosses the membrane as a helical span at residues 899–919 (VGLLLAPGGEFAFVAFGEAVN). At 920 to 928 (QGIMTPQLS) the chain is on the chloroplast intermembrane side. A helical transmembrane segment spans residues 929–949 (SLLFLVVGISMALTPWLAAGG). The Stromal portion of the chain corresponds to 950–1174 (QLIASRFELQ…NQIIEGTLAI (225 aa)). In terms of domain architecture, RCK N-terminal spans 975–1092 (QGHIIICGFG…EKAGATAVVP (118 aa)). The tract at residues 1141-1174 (SLGYGFSRSTSKPKPPSPSETSDDNQIIEGTLAI) is disordered.

This sequence belongs to the monovalent cation:proton antiporter 2 (CPA2) transporter (TC 2.A.37) family. KEA (TC 2.A.37.1) subfamily. In terms of processing, acetylated at Lys-170 by the stromal acetyltransferase enzyme NSI. Detected in leaves, stems and flowers. Expressed in shoots and roots. Mainly localized to leaf veins, hypocotyls, mesophylls and guard cells. Accumulates at high levels in small and dividing plastids (at protein level).

It is found in the plastid. Its subcellular location is the chloroplast inner membrane. The protein localises to the plastid inner membrane. The enzyme catalyses K(+)(in) + H(+)(out) = K(+)(out) + H(+)(in). With respect to regulation, repressed by sodium ions Na(+). Functionally, electroneutral K(+)/H(+) efflux antiporter modulating monovalent cation and pH homeostasis in plastids, especially during plastid division and thylakoid membrane formation. Transports K(+) and Cs(+) preferentially relative to Na(+) or Li(+). May function in osmotic adjustment. Collaboratively with KEA1, adjusts alkaline stromal pH upon light to dark transitions in plastids. Together with KEA1, critical for chloroplast development, including chloroplast RNA-metabolism (e.g. rRNA maturation, polysome loading and RNA-protein interactions) and plastid gene expression (PGE), ion homeostasis, and photosynthesis. Contributes, during early seedling development, to the regulation of photosynthesis and abscisic acid- (ABA-) mediated primary root growth in a sucrose-dependent manner. Involved in the regulation of reactive oxygen and nitrogen species (ROS and RNS) metabolism. Required in roots for rapid hyperosmotic-induced Ca(2+) responses and for osmo-sensory potentiation in hyperosmotic conditions. May counteract resilience to drought and salt stress, involving photorespiratory pathway and stomata closure. The protein is K(+) efflux antiporter 2, chloroplastic of Arabidopsis thaliana (Mouse-ear cress).